A 494-amino-acid polypeptide reads, in one-letter code: Tripartite motif-containing protein 5 (494 aa).

The residue at position 2 (Ala2) is an N-acetylalanine. The RING-type zinc finger occupies 15–59 (CPICLELLTEPLSLDCGHSFCQACITANHKESTPHQGERSCPLCR). A Phosphoserine modification is found at Ser86. A B box-type zinc finger spans residues 91-132 (QKVGHCARHGEKLLLFCEQDGNVICWLCERSQEHRGHHTLLV). Cys96, His99, Cys118, and His124 together coordinate Zn(2+). The stretch at 131 to 223 (LVEEVAEKYQ…RLVQSESDMV (93 aa)) forms a coiled coil. A required for interaction with GABARAP and for autophagy region spans residues 186-199 (FKQLRDILDCEESK). Residues 280–494 (PDLKAMLQAF…LPMTLCSPSS (215 aa)) enclose the B30.2/SPRY domain.

Belongs to the TRIM/RBCC family. As to quaternary structure, can form homodimers and homotrimers. In addition to lower-order dimerization, also exhibits a higher-order multimerization and both low- and high-order multimerizations are essential for its restriction activity. Interacts with BTBD1 and BTBD2. Interacts with PSMC4, PSMC5, PSMD7 and HSPA8/HSC70. Interacts (via B30.2/SPRY domain) with HSPA1A/B. Interacts with PSMC2, MAP3K7/TAK1, TAB2 and TAB3. Interacts with SQSTM1. Interacts with TRIM6 and TRIM34. Interacts with ULK1 (phosphorylated form), GABARAP, GABARAPL1, GABARAPL2, MAP1LC3A, MAP1LC3C and BECN1. Degraded in a proteasome-independent fashion in the absence of viral infection but in a proteasome-dependent fashion following exposure to restriction sensitive virus. Post-translationally, autoubiquitinated in a RING finger- and UBE2D2-dependent manner. Monoubiquitinated by TRIM21. Deubiquitinated by Yersinia YopJ. Ubiquitination may not lead to proteasomal degradation.

Its subcellular location is the cytoplasm. The protein localises to the nucleus. The enzyme catalyses S-ubiquitinyl-[E2 ubiquitin-conjugating enzyme]-L-cysteine + [acceptor protein]-L-lysine = [E2 ubiquitin-conjugating enzyme]-L-cysteine + N(6)-ubiquitinyl-[acceptor protein]-L-lysine.. It functions in the pathway protein modification; protein ubiquitination. Capsid-specific restriction factor that prevents infection from non-host-adapted retroviruses. Blocks viral replication early in the life cycle, after viral entry but before reverse transcription. In addition to acting as a capsid-specific restriction factor, also acts as a pattern recognition receptor that activates innate immune signaling in response to the retroviral capsid lattice. Binding to the viral capsid triggers its E3 ubiquitin ligase activity, and in concert with the heterodimeric ubiquitin conjugating enzyme complex UBE2V1-UBE2N (also known as UBC13-UEV1A complex) generates 'Lys-63'-linked polyubiquitin chains, which in turn are catalysts in the autophosphorylation of the MAP3K7/TAK1 complex (includes TAK1, TAB2, and TAB3). Activation of the MAP3K7/TAK1 complex by autophosphorylation results in the induction and expression of NF-kappa-B and MAPK-responsive inflammatory genes, thereby leading to an innate immune response in the infected cell. Plays a role in regulating autophagy through activation of autophagy regulator BECN1 by causing its dissociation from its inhibitors BCL2 and TAB2. The chain is Tripartite motif-containing protein 5 (TRIM5) from Saguinus labiatus (Red-chested mustached tamarin).